We begin with the raw amino-acid sequence, 122 residues long: Large ribosomal subunit protein uL14 (122 aa).

The protein belongs to the universal ribosomal protein uL14 family. Part of the 50S ribosomal subunit. Forms a cluster with proteins L3 and L19. In the 70S ribosome, L14 and L19 interact and together make contacts with the 16S rRNA in bridges B5 and B8.

Functionally, binds to 23S rRNA. Forms part of two intersubunit bridges in the 70S ribosome. The chain is Large ribosomal subunit protein uL14 from Rickettsia canadensis (strain McKiel).